The sequence spans 139 residues: MSPFGQQLRELRRARKLTVNQLAVYSGISSATISKIENGKRGTPKPATIKKLAAVLKVPYENLMAAAGHIQAFPEEIREASEGYQSVYEIYQTAVTRGAEHLPIFNSQKWEHLSKQDIENLSKYFDFLSSEAKKRASSS.

The HTH cro/C1-type domain maps to 8–63; sequence LRELRRARKLTVNQLAVYSGISSATISKIENGKRGTPKPATIKKLAAVLKVPYENL. Residues 19–38 constitute a DNA-binding region (H-T-H motif); it reads VNQLAVYSGISSATISKIEN.

This is an uncharacterized protein from Bacillus subtilis (strain 168).